We begin with the raw amino-acid sequence, 425 residues long: Riboflavin biosynthesis protein RibBA (425 aa).

Positions 1–204 are DHBP synthase; that stretch reads MTRLDSVERA…IADLIEWRRK (204 aa). D-ribulose 5-phosphate is bound by residues 28-29, aspartate 33, 141-145, and glutamate 165; these read RE and RPGHT. Glutamate 29 contributes to the Mg(2+) binding site. Histidine 144 is a binding site for Mg(2+). Positions 205–425 are GTP cyclohydrolase II; the sequence is HEKHIERVAE…HLPGEFGGAL (221 aa). Residue 259 to 263 participates in GTP binding; sequence RVHSE. Positions 264, 275, and 277 each coordinate Zn(2+). GTP-binding positions include glutamine 280, 303 to 305, and threonine 325; that span reads EGR. Residue aspartate 337 is the Proton acceptor; for GTP cyclohydrolase activity of the active site. The active-site Nucleophile; for GTP cyclohydrolase activity is the arginine 339. Positions 360 and 365 each coordinate GTP.

The protein in the N-terminal section; belongs to the DHBP synthase family. This sequence in the C-terminal section; belongs to the GTP cyclohydrolase II family. It depends on Mg(2+) as a cofactor. Mn(2+) serves as cofactor. Requires Zn(2+) as cofactor.

It carries out the reaction D-ribulose 5-phosphate = (2S)-2-hydroxy-3-oxobutyl phosphate + formate + H(+). The catalysed reaction is GTP + 4 H2O = 2,5-diamino-6-hydroxy-4-(5-phosphoribosylamino)-pyrimidine + formate + 2 phosphate + 3 H(+). The protein operates within cofactor biosynthesis; riboflavin biosynthesis; 2-hydroxy-3-oxobutyl phosphate from D-ribulose 5-phosphate: step 1/1. It participates in cofactor biosynthesis; riboflavin biosynthesis; 5-amino-6-(D-ribitylamino)uracil from GTP: step 1/4. Functionally, catalyzes the conversion of D-ribulose 5-phosphate to formate and 3,4-dihydroxy-2-butanone 4-phosphate. Catalyzes the conversion of GTP to 2,5-diamino-6-ribosylamino-4(3H)-pyrimidinone 5'-phosphate (DARP), formate and pyrophosphate. The protein is Riboflavin biosynthesis protein RibBA of Mycobacterium bovis (strain ATCC BAA-935 / AF2122/97).